The sequence spans 48 residues: Photosystem II reaction center protein K (48 aa).

The propeptide occupies 1 to 11 (MFPSTNQEVLA). The chain crosses the membrane as a helical span at residues 23-43 (IVDVLPIIPLLFLLLAFVWQA).

Belongs to the PsbK family. In terms of assembly, PSII is composed of 1 copy each of membrane proteins PsbA, PsbB, PsbC, PsbD, PsbE, PsbF, PsbH, PsbI, PsbJ, PsbK, PsbL, PsbM, PsbT, PsbY, PsbZ, Psb30/Ycf12, at least 3 peripheral proteins of the oxygen-evolving complex and a large number of cofactors. It forms dimeric complexes.

It localises to the plastid. The protein localises to the chloroplast thylakoid membrane. Functionally, one of the components of the core complex of photosystem II (PSII). PSII is a light-driven water:plastoquinone oxidoreductase that uses light energy to abstract electrons from H(2)O, generating O(2) and a proton gradient subsequently used for ATP formation. It consists of a core antenna complex that captures photons, and an electron transfer chain that converts photonic excitation into a charge separation. The chain is Photosystem II reaction center protein K from Euglena sanguinea.